We begin with the raw amino-acid sequence, 347 residues long: Very-long-chain 3-oxoacyl-CoA reductase (347 aa).

A helical transmembrane segment spans residues 20–40 (LLWVVFGLGVLKCTTLSLRFL). NADP(+) is bound by residues Asp-120, Asn-147, Tyr-223, Lys-227, Val-256, and Ser-258. The active-site Proton donor is Tyr-223. Lys-227 serves as the catalytic Lowers pKa of active site Tyr.

Belongs to the short-chain dehydrogenases/reductases (SDR) family. As to quaternary structure, interacts with the fatty acid elongation system components ELO3 and TSC13.

The protein resides in the endoplasmic reticulum membrane. It carries out the reaction a very-long-chain (3R)-3-hydroxyacyl-CoA + NADP(+) = a very-long-chain 3-oxoacyl-CoA + NADPH + H(+). The catalysed reaction is 3-oxooctadecanoyl-CoA + NADPH + H(+) = (3R)-hydroxyoctadecanoyl-CoA + NADP(+). It catalyses the reaction 3-oxoeicosanoyl-CoA + NADPH + H(+) = (3R)-hydroxyeicosanoyl-CoA + NADP(+). The enzyme catalyses 3-oxodocosanoyl-CoA + NADPH + H(+) = (3R)-hydroxydocosanoyl-CoA + NADP(+). It carries out the reaction 3-oxotetracosanoyl-CoA + NADPH + H(+) = (3R)-hydroxytetracosanoyl-CoA + NADP(+). The catalysed reaction is 3-oxohexacosanoyl-CoA + NADPH + H(+) = (3R)-hydroxyhexacosanoyl-CoA + NADP(+). It functions in the pathway lipid metabolism; fatty acid biosynthesis. Functionally, component of the microsomal membrane bound fatty acid elongation system, which produces the 26-carbon very long-chain fatty acids (VLCFA) from palmitate. Catalyzes the reduction of the 3-ketoacyl-CoA intermediate that is formed in each cycle of fatty acid elongation. VLCFAs serve as precursors for ceramide and sphingolipids. In Saccharomyces cerevisiae (strain ATCC 204508 / S288c) (Baker's yeast), this protein is Very-long-chain 3-oxoacyl-CoA reductase (IFA38).